Consider the following 434-residue polypeptide: Adenylosuccinate synthetase (434 aa).

GTP is bound by residues 15-21 (GDEGKGK) and 43-45 (GHT). Residue Asp-16 is the Proton acceptor of the active site. Mg(2+)-binding residues include Asp-16 and Gly-43. IMP is bound by residues 16-19 (DEGK), 41-44 (NAGH), Thr-133, Arg-147, Gln-228, Thr-243, and Arg-307. His-44 acts as the Proton donor in catalysis. 303-309 (SVTGRAR) contributes to the substrate binding site. GTP-binding positions include Arg-309, 335-337 (KLD), and 418-420 (STG).

It belongs to the adenylosuccinate synthetase family. Homodimer. Mg(2+) is required as a cofactor.

It localises to the cytoplasm. It carries out the reaction IMP + L-aspartate + GTP = N(6)-(1,2-dicarboxyethyl)-AMP + GDP + phosphate + 2 H(+). The protein operates within purine metabolism; AMP biosynthesis via de novo pathway; AMP from IMP: step 1/2. Plays an important role in the de novo pathway of purine nucleotide biosynthesis. Catalyzes the first committed step in the biosynthesis of AMP from IMP. The protein is Adenylosuccinate synthetase of Neisseria gonorrhoeae (strain NCCP11945).